A 181-amino-acid chain; its full sequence is Protein Syd (181 aa).

The protein belongs to the Syd family.

The protein localises to the cell inner membrane. In terms of biological role, interacts with the SecY protein in vivo. May bind preferentially to an uncomplexed state of SecY, thus functioning either as a chelating agent for excess SecY in the cell or as a regulatory factor that negatively controls the translocase function. In Citrobacter koseri (strain ATCC BAA-895 / CDC 4225-83 / SGSC4696), this protein is Protein Syd.